Here is a 435-residue protein sequence, read N- to C-terminus: 5-methylthioadenosine/S-adenosylhomocysteine deaminase (435 aa).

Zn(2+) contacts are provided by His65 and His67. Substrate is bound by residues Glu94, Arg150, and His189. Residue His216 coordinates Zn(2+). Substrate is bound by residues Glu219 and Asp304. Asp304 is a binding site for Zn(2+).

Belongs to the metallo-dependent hydrolases superfamily. MTA/SAH deaminase family. Zn(2+) serves as cofactor.

It catalyses the reaction S-adenosyl-L-homocysteine + H2O + H(+) = S-inosyl-L-homocysteine + NH4(+). The enzyme catalyses S-methyl-5'-thioadenosine + H2O + H(+) = S-methyl-5'-thioinosine + NH4(+). Catalyzes the deamination of 5-methylthioadenosine and S-adenosyl-L-homocysteine into 5-methylthioinosine and S-inosyl-L-homocysteine, respectively. Is also able to deaminate adenosine. This chain is 5-methylthioadenosine/S-adenosylhomocysteine deaminase, found in Bacillus cereus (strain B4264).